The sequence spans 474 residues: UDP-N-acetylmuramate--L-alanine ligase (474 aa).

ATP is bound at residue 119–125 (GTHGKTT).

The protein belongs to the MurCDEF family.

It is found in the cytoplasm. The catalysed reaction is UDP-N-acetyl-alpha-D-muramate + L-alanine + ATP = UDP-N-acetyl-alpha-D-muramoyl-L-alanine + ADP + phosphate + H(+). It participates in cell wall biogenesis; peptidoglycan biosynthesis. Functionally, cell wall formation. This is UDP-N-acetylmuramate--L-alanine ligase from Jannaschia sp. (strain CCS1).